The following is a 1010-amino-acid chain: Retinoblastoma-related protein 1 (1010 aa).

The tract at residues 1–23 is disordered; the sequence is MEGAAPPASSGSEVTGAGSGKVD. Residues 419-619 are domain A; that stretch reads TPVSTAMTTA…EKGSSMYNSL (201 aa). The tract at residues 419-861 is pocket; sequence TPVSTAMTTA…NEVFIPTVKP (443 aa). Positions 620-730 are spacer; that stretch reads IVARPTLSAE…PAAGGELCAE (111 aa). A disordered region spans residues 657 to 679; that stretch reads LPPLPFQKQEHSPDKDEVRSPKR. Residues 664–679 are compositionally biased toward basic and acidic residues; sequence KQEHSPDKDEVRSPKR. Residues 731–861 form a domain B region; the sequence is TGIGVFLSKI…NEVFIPTVKP (131 aa). The interval 868 to 898 is disordered; that stretch reads SGTSPNKKNEEKCAADGPYPESPRLSRFPNL.

Belongs to the retinoblastoma protein (RB) family.

Its subcellular location is the nucleus. Functionally, regulator of biological processes that recruits a histone deacetylase to control gene transcription. May play a role in the entry into mitosis, negatively regulating the cell proliferation. Formation of stable complexes with geminiviridae replication-associated proteins may create a cellular environment which favors viral DNA replication. This is Retinoblastoma-related protein 1 (RBR1) from Oryza sativa subsp. indica (Rice).